The chain runs to 89 residues: Putative regulatory protein MAE_11840 (89 aa).

The protein belongs to the RemA family.

This Microcystis aeruginosa (strain NIES-843 / IAM M-2473) protein is Putative regulatory protein MAE_11840.